Here is a 1657-residue protein sequence, read N- to C-terminus: MHRGPSLLLILCALASRVLGPASGLVTEGRAGLDIVHPVRVDAGGSFLSYELWPRVLRKRDVSTTQASSAFYQLQYQGRELLFNLTTNPYLMAPGFVSEIRRHSTLGHAHIQTSVPTCHLLGDVQDPELEGGFAAISACDGLRGVFQLSNEDYFIEPLDGVSAQPGHAQPHVVYKHQGSRKQAQQGDSRPSGTCGMQVPPDLEQQREHWEQQQQKRRQQRSVSKEKWVETLVVADSKMVEYHGQPQVESYVLTIMNMVAGLFHDPSIGNPIHISIVRLIILEDEEKDLKITHHAEETLKNFCRWQKNINIKGDDHPQHHDTAILLTRKDLCASMNQPCETLGLSHVSGLCHPQLSCSVSEDTGMPLAFTVAHELGHSFGIQHDGTGNDCESIGKRPFIMSPQLLYDRGIPLTWSRCSREYITRFLDRGWGLCLDDRPSKDVIALPSVLPGVLYDVNHQCRLQYGSHSAYCEDMDDVCHTLWCSVGTTCHSKLDAAVDGTSCGKNKWCLKGECVPEGFQPEAVDGGWSGWSAWSDCSRSCGVGVRSSERQCTQPVPKNRGKYCVGERKRSQLCNLPACPPDRPSFRHTQCSQFDGMLYKGKLHKWVPVPNDDNPCELHCRPSNSSNTEKLRDAVVDGTPCYQSRISRDICLNGICKNVGCDFVIDSGAEEDRCGVCRGDGSTCQTVSRTFKETEGQGYVDIGLIPAGAREILIEEVAEAANFLALRSEDPDKYFLNGGWTIQWNGDYRVAGTTFTYARKGNWENLTSPGPTSEPVWIQLLFQEKNPGVHYQYTIQRDSHDQVRPPEFSWHYGPWSKCTVTCGTGVQRQSLYCMERQAGVVAEEYCNTLNRPDERQRKCSEEPCPPRWWAGEWQPCSRSCGPEGLSRRAVFCIRSMGLDEQRALELSACEHLPRPLAETPCNRHVICPSTWGVGNWSQCSVTCGAGIRQRSVLCINNTDVPCDEAERPITETFCFLQPCQYPMYIVDTGASGSGSSSPELFNEVDFIPNQLAPRPSPASSPKPVSISNAIDEEELDPPGPVFVDDFYYDYNFINFHEDLSYGSFEEPHPDLVDNGGWTAPPHIRPTESPSDTPVPTAGALGAEAEDIQGSWSPSPLLSEASYSPPGLEQTSINPLANFLTEEDTPMGAPELGFPSLPWPPASVDDMMTPVGPGNPDELLVKEDEQSPPSTPWSDRNKLSTDGNPLGHTSPALPQSPIPTQPSPPSISPTQASPSPDVVEVSTGWNAAWDPVLEADLKPGHGELPSTVEVASPPLLPMATVPGIWGRDSPLEPGTPTFSSPELSSQHLKTLTMPGTLLLTVPTDLRSPGPSGQPQTPNLEGTQSPGLLPTPARETQTNSSKDPEVQPLQPSLEEDGDPADPLPARNASWQVGNWSQCSTTCGLGAIWRLVSCSSGNDEDCTLASRPQPARHCHLRPCAAWRTGNWSKCSRNCGGGSSTRDVQCVDTRDLRPLRPFHCQPGPTKPPNRQLCGTQPCLPWYTSSWRECSEACGGGEQQRLVTCPEPGLCEESLRPNNSRPCNTHPCTQWVVGPWGQCSAPCGGGVQRRLVRCVNTQTGLAEEDSDLCSHEAWPESSRPCATEDCELVEPPRCERDRLSFNFCETLRLLGRCQLPTIRAQCCRSCPPLSRGVPSRGHQRVARR.

Residues 1–20 (MHRGPSLLLILCALASRVLG) form the signal peptide. The propeptide occupies 21–220 (PASGLVTEGR…QQQQKRRQQR (200 aa)). An N-linked (GlcNAc...) asparagine glycan is attached at Asn84. The tract at residues 165–221 (PGHAQPHVVYKHQGSRKQAQQGDSRPSGTCGMQVPPDLEQQREHWEQQQQKRRQQRS) is disordered. Over residues 180–191 (RKQAQQGDSRPS) the composition is skewed to polar residues. Residues 192-199 (GTCGMQVP) carry the Cysteine switch motif. Cys194 is a binding site for Zn(2+). The Peptidase M12B domain maps to 226–437 (KWVETLVVAD…GWGLCLDDRP (212 aa)). Cystine bridges form between Cys302/Cys356, Cys331/Cys338, Cys350/Cys432, Cys389/Cys416, Cys459/Cys482, Cys470/Cys488, Cys477/Cys507, Cys501/Cys512, Cys535/Cys572, Cys539/Cys577, and Cys550/Cys562. Residue His372 participates in Zn(2+) binding. The active site involves Glu373. The Zn(2+) site is built by His376 and His382. The Disintegrin domain occupies 447–522 (VLPGVLYDVN…VPEGFQPEAV (76 aa)). In terms of domain architecture, TSP type-1 1 spans 523-578 (DGGWSGWSAWSDCSRSCGVGVRSSERQCTQPVPKNRGKYCVGERKRSQLCNLPACP). A glycan (N-linked (GlcNAc...) asparagine) is linked at Asn622. The tract at residues 683-794 (QTVSRTFKET…PGVHYQYTIQ (112 aa)) is spacer. 3 consecutive TSP type-1 domains span residues 804–863 (PEFS…EPCP), 864–923 (PRWW…NRHV), and 925–978 (CPST…QPCQ). Disordered stretches follow at residues 1009–1034 (LAPR…EELD), 1073–1127 (GGWT…GLEQ), 1140–1237 (EDTP…DVVE), 1283–1304 (GRDS…SSQH), and 1317–1384 (TVPT…ARNA). Over residues 1211–1224 (PQSPIPTQPSPPSI) the composition is skewed to pro residues. Polar residues-rich tracts occupy residues 1293–1304 (PTFSSPELSSQH) and 1327–1342 (PSGQ…TQSP). TSP type-1 domains follow at residues 1366–1414 (QPSL…SGND), 1417–1477 (CTLA…CQPG), 1479–1522 (TKPP…PEPG), and 1524–1584 (CEES…LCSH). Residues 1587–1627 (WPESSRPCATEDCELVEPPRCERDRLSFNFCETLRLLGRCQ) enclose the PLAC domain.

As to quaternary structure, interacts with COMP. Zn(2+) serves as cofactor. In terms of processing, N-glycosylated. Can be O-fucosylated by POFUT2 on a serine or a threonine residue found within the consensus sequence C1-X(2)-(S/T)-C2-G of the TSP type-1 repeat domains where C1 and C2 are the first and second cysteine residue of the repeat, respectively. Fucosylated repeats can then be further glycosylated by the addition of a beta-1,3-glucose residue by the glucosyltransferase, B3GALTL. Fucosylation mediates the efficient secretion of ADAMTS family members. Can also be C-glycosylated with one or two mannose molecules on tryptophan residues within the consensus sequence W-X-X-W of the TPRs. N- and C-glycosylations can also facilitate secretion. O-glycosylated proteoglycan; contains chondroitin sulfate. Post-translationally, may be cleaved by a furin endopeptidase. The precursor is sequentially processed.

The protein localises to the secreted. It localises to the extracellular space. The protein resides in the extracellular matrix. Its function is as follows. Metalloprotease. Was previously shown to degrade COMP. However, a later study found no activity against COMP. The chain is A disintegrin and metalloproteinase with thrombospondin motifs 7 (Adamts7) from Mus musculus (Mouse).